The primary structure comprises 165 residues: NADPH-dependent 7-cyano-7-deazaguanine reductase (165 aa).

Residue Cys-56 is the Thioimide intermediate of the active site. Asp-63 (proton donor) is an active-site residue. Substrate is bound by residues Val-78–Ser-80 and His-97–Glu-98.

This sequence belongs to the GTP cyclohydrolase I family. QueF type 1 subfamily.

The protein localises to the cytoplasm. It carries out the reaction 7-aminomethyl-7-carbaguanine + 2 NADP(+) = 7-cyano-7-deazaguanine + 2 NADPH + 3 H(+). The protein operates within tRNA modification; tRNA-queuosine biosynthesis. Its function is as follows. Catalyzes the NADPH-dependent reduction of 7-cyano-7-deazaguanine (preQ0) to 7-aminomethyl-7-deazaguanine (preQ1). The polypeptide is NADPH-dependent 7-cyano-7-deazaguanine reductase (Bacillus cytotoxicus (strain DSM 22905 / CIP 110041 / 391-98 / NVH 391-98)).